The primary structure comprises 328 residues: tRNA-modifying protein YgfZ (328 aa).

2 residues coordinate folate: Trp-28 and Trp-190.

The protein belongs to the tRNA-modifying YgfZ family.

It localises to the cytoplasm. In terms of biological role, folate-binding protein involved in regulating the level of ATP-DnaA and in the modification of some tRNAs. It is probably a key factor in regulatory networks that act via tRNA modification, such as initiation of chromosomal replication. The polypeptide is tRNA-modifying protein YgfZ (Sodalis glossinidius (strain morsitans)).